Here is a 130-residue protein sequence, read N- to C-terminus: MARRTTTRVKRREKKNIEHGIAHIKSTFNNTIISITDRHGNAISWSSAGTIGFKGSRKSTPFAAQQAAENAAKAAMEHGLKEVECYVKGPGAGREAAIRSLQAAGLEVSVIKDVTPIPHNGCRPPKRRRV.

This sequence belongs to the universal ribosomal protein uS11 family. Part of the 30S ribosomal subunit. Interacts with proteins S7 and S18. Binds to IF-3.

Functionally, located on the platform of the 30S subunit, it bridges several disparate RNA helices of the 16S rRNA. Forms part of the Shine-Dalgarno cleft in the 70S ribosome. This chain is Small ribosomal subunit protein uS11, found in Syntrophomonas wolfei subsp. wolfei (strain DSM 2245B / Goettingen).